The following is a 165-amino-acid chain: uncharacterized protein (165 aa).

The 112-residue stretch at 28–139 (QNALKDTGLA…KPNEREEAVK (112 aa)) folds into the Cupin type-1 domain.

This is an uncharacterized protein from Bacillus subtilis (strain 168).